We begin with the raw amino-acid sequence, 427 residues long: Large ribosomal subunit protein uL4 (427 aa).

A2 is subject to N-acetylalanine. K14 carries the post-translational modification N6-acetyllysine. The residue at position 97 (R97) is an Omega-N-methylarginine. The residue at position 106 (K106) is an N6-acetyllysine. A Glycyl lysine isopeptide (Lys-Gly) (interchain with G-Cter in SUMO2) cross-link involves residue K239. K259 carries the N6-acetyllysine modification. Residue T266 is modified to Phosphothreonine. 2 positions are modified to phosphoserine: S290 and S295. R300 is modified (citrulline). A Glycyl lysine isopeptide (Lys-Gly) (interchain with G-Cter in SUMO2) cross-link involves residue K327. N6-acetyllysine is present on residues K333 and K353. An N6-acetyllysine; alternate modification is found at K364. A Glycyl lysine isopeptide (Lys-Gly) (interchain with G-Cter in SUMO1); alternate cross-link involves residue K364. S365 carries the post-translational modification Phosphoserine. The disordered stretch occupies residues 369 to 427 (AAVAGKKPVVGKKGKKAAVGVKKQKKPLVGKKAAATKKPAPEKKPAEKKPTTEEKKPAA). Residues 377 to 397 (VVGKKGKKAAVGVKKQKKPLV) show a composition bias toward basic residues. Positions 407–427 (PAPEKKPAEKKPTTEEKKPAA) are enriched in basic and acidic residues.

It belongs to the universal ribosomal protein uL4 family. Component of the large ribosomal subunit. May bind IPO9 with low affinity. Interacts with RBM3. Citrullinated by PADI4.

It is found in the cytoplasm. Component of the large ribosomal subunit. The ribosome is a large ribonucleoprotein complex responsible for the synthesis of proteins in the cell. The chain is Large ribosomal subunit protein uL4 (RPL4) from Pongo abelii (Sumatran orangutan).